Here is a 414-residue protein sequence, read N- to C-terminus: Peptide chain release factor subunit 1 (414 aa).

It belongs to the eukaryotic release factor 1 family. As to quaternary structure, heterodimer of two subunits, one of which binds GTP.

It localises to the cytoplasm. Its function is as follows. Directs the termination of nascent peptide synthesis (translation) in response to the termination codons UAA, UAG and UGA. The chain is Peptide chain release factor subunit 1 from Methanococcoides burtonii (strain DSM 6242 / NBRC 107633 / OCM 468 / ACE-M).